The primary structure comprises 504 residues: CaM kinase-like vesicle-associated protein (504 aa).

Residues 24–286 enclose the Protein kinase domain; the sequence is YDLGQVVKTE…AEEAISHEWI (263 aa). A disordered region spans residues 378–504; it reads KSDDMASADR…AQESQRVETS (127 aa). Position 384 is a phosphoserine (S384). The segment covering 390-431 has biased composition (polar residues); that stretch reads TPATDGSATPATDGSVTPATDGSITPATDGSVTPATDRSATP. Phosphothreonine is present on residues T438 and T462. Positions 445 to 470 are enriched in low complexity; that stretch reads TVPAAQSSAAPAAKAAATPEPAVAQP.

The protein belongs to the protein kinase superfamily. CAMK Ser/Thr protein kinase family. In terms of assembly, interacts with calmodulin, in the presence of calcium. Requires Ca(2+) as cofactor. In terms of tissue distribution, expressed in brain and weakly in eye. Not detected in liver, kidney, spleen, thymus, bladder, aorta, lung, intestine, esophagus, stomach, skeletal muscle, heart, diaphragm, uterus, tail skin, submaxillary gland, prostate, ear, epididymis, placenta, pancreas, ovary, testis, adrenal gland, parathyroid gland, thyroid gland, pineal gland, pituitary and sciatic nerve. In adult hippocampus, predominantly expressed in caudate nucleus, cortex, hypothalamus, olfactory bulb, and midbrain and faintly in pons, brainstem and spinal cord.

It is found in the cell membrane. Its subcellular location is the cytoplasmic vesicle membrane. In terms of biological role, has no detectable kinase activity in vitro. The chain is CaM kinase-like vesicle-associated protein (Camkv) from Rattus norvegicus (Rat).